An 85-amino-acid polypeptide reads, in one-letter code: Small integral membrane protein 2 (85 aa).

Residues glycine 21–alanine 43 form a helical membrane-spanning segment. Positions serine 51–glycine 85 are disordered.

The protein localises to the membrane. The polypeptide is Small integral membrane protein 2 (SMIM2) (Homo sapiens (Human)).